A 476-amino-acid chain; its full sequence is Aspartyl/glutamyl-tRNA(Asn/Gln) amidotransferase subunit B (476 aa).

Belongs to the GatB/GatE family. GatB subfamily. As to quaternary structure, heterotrimer of A, B and C subunits.

It carries out the reaction L-glutamyl-tRNA(Gln) + L-glutamine + ATP + H2O = L-glutaminyl-tRNA(Gln) + L-glutamate + ADP + phosphate + H(+). The enzyme catalyses L-aspartyl-tRNA(Asn) + L-glutamine + ATP + H2O = L-asparaginyl-tRNA(Asn) + L-glutamate + ADP + phosphate + 2 H(+). Allows the formation of correctly charged Asn-tRNA(Asn) or Gln-tRNA(Gln) through the transamidation of misacylated Asp-tRNA(Asn) or Glu-tRNA(Gln) in organisms which lack either or both of asparaginyl-tRNA or glutaminyl-tRNA synthetases. The reaction takes place in the presence of glutamine and ATP through an activated phospho-Asp-tRNA(Asn) or phospho-Glu-tRNA(Gln). This is Aspartyl/glutamyl-tRNA(Asn/Gln) amidotransferase subunit B from Listeria monocytogenes serovar 1/2a (strain ATCC BAA-679 / EGD-e).